The sequence spans 146 residues: MGRFISISFGLLVVFLSLSGTEAAFCCPSGWSAYDQNCYKVFTEEMNWADAEKFCTEQKKGSHLVSLHSREEEKFVVNLISENLEYPATWIGLGNMWKDCRMEWSDRGNVKYKALAEESYCLIMITHEKVWKSMTCNFIAPVVCKF.

Positions 1-23 (MGRFISISFGLLVVFLSLSGTEA) are cleaved as a signal peptide. Intrachain disulfides connect C27–C38, C55–C144, and C121–C136. The region spanning 34 to 145 (YDQNCYKVFT…CNFIAPVVCK (112 aa)) is the C-type lectin domain.

This sequence belongs to the snaclec family. Heterodimer; disulfide-linked.

The protein resides in the secreted. In terms of biological role, interferes with one step of hemostasis (modulation of platelet aggregation, or coagulation cascade, for example). The sequence is that of Snaclec 4 from Daboia siamensis (Eastern Russel's viper).